Here is a 179-residue protein sequence, read N- to C-terminus: Natural killer cells antigen CD94 (179 aa).

Topologically, residues 1–10 (MAVSRITRWR) are cytoplasmic. The helical; Signal-anchor for type II membrane protein transmembrane segment at 11-31 (LMSVIFGIKCLFLMVTLGVLL) threads the bilayer. Residues 32 to 179 (INSFTIQNIQ…NRYICKKLPI (148 aa)) lie on the Extracellular side of the membrane. Cystine bridges form between Cys-58–Cys-70, Cys-61–Cys-72, Cys-89–Cys-174, and Cys-152–Cys-166. Residues 68–175 (HQCNCYFISK…CENKNRYICK (108 aa)) enclose the C-type lectin domain. N-linked (GlcNAc...) asparagine glycosylation is found at Asn-93 and Asn-109.

In terms of assembly, can form disulfide-bonded heterodimer with NKG2 family members KLRC1 and KLRC2. KLRD1-KLRC1 heterodimer interacts with peptide-bound MHC-E-B2M heterotrimeric complex. KLRD1 plays a prominent role in directly interacting with MHC-E. KLRD1-KLRC1 interacts with much higher affinity with peptide-bound MHC-E-B2M than KLRD1-KLRC2. Interacts with the adapter protein TYROBP/DAP12; this interaction is required for cell surface expression and cell activation.

Its subcellular location is the cell membrane. Functionally, immune receptor involved in self-nonself discrimination. In complex with KLRC1 or KLRC2 on cytotoxic and regulatory lymphocyte subsets, recognizes non-classical major histocompatibility (MHC) class Ib molecule MHC-E loaded with self-peptides derived from the signal sequence of classical MHC class Ia and non-classical MHC class Ib molecules. Enables cytotoxic cells to monitor the expression of MHC class I molecules in healthy cells and to tolerate self. Primarily functions as a ligand binding subunit as it lacks the capacity to signal. Its function is as follows. KLRD1-KLRC1 acts as an immune inhibitory receptor. Key inhibitory receptor on natural killer (NK) cells that regulates their activation and effector functions. Dominantly counteracts T cell receptor signaling on a subset of memory/effector CD8-positive T cells as part of an antigen-driven response to avoid autoimmunity. On intraepithelial CD8-positive gamma-delta regulatory T cells triggers TGFB1 secretion, which in turn limits the cytotoxic programming of intraepithelial CD8-positive alpha-beta T cells, distinguishing harmless from pathogenic antigens. In MHC-E-rich tumor microenvironment, acts as an immune inhibitory checkpoint and may contribute to progressive loss of effector functions of NK cells and tumor-specific T cells, a state known as cell exhaustion. Upon MHC-E-peptide binding, transmits intracellular signals through KLRC1 immunoreceptor tyrosine-based inhibition motifs (ITIMs) by recruiting INPP5D/SHIP-1 and INPPL1/SHIP-2 tyrosine phosphatases to ITIMs, and ultimately opposing signals transmitted by activating receptors through dephosphorylation of proximal signaling molecules. KLRD1-KLRC2 acts as an immune activating receptor. On cytotoxic lymphocyte subsets recognizes MHC-E loaded with signal sequence-derived peptides from non-classical MHC class Ib MHC-G molecules, likely playing a role in the generation and effector functions of adaptive NK cells and in maternal-fetal tolerance during pregnancy. Regulates the effector functions of terminally differentiated cytotoxic lymphocyte subsets, and in particular may play a role in adaptive NK cell response to viral infection. Upon MHC-E-peptide binding, transmits intracellular signals via the adapter protein TYROBP/DAP12, triggering the phosphorylation of proximal signaling molecules and cell activation. This chain is Natural killer cells antigen CD94 (Klrd1), found in Mus musculus (Mouse).